A 463-amino-acid chain; its full sequence is Glutamate--tRNA ligase (463 aa).

Residues 8–18 (PSPTGYLHIGG) carry the 'HIGH' region motif. The short motif at 236-240 (RLSKR) is the 'KMSKS' region element. Lys-239 lines the ATP pocket.

The protein belongs to the class-I aminoacyl-tRNA synthetase family. Glutamate--tRNA ligase type 1 subfamily. Monomer.

The protein localises to the cytoplasm. It catalyses the reaction tRNA(Glu) + L-glutamate + ATP = L-glutamyl-tRNA(Glu) + AMP + diphosphate. Functionally, catalyzes the attachment of glutamate to tRNA(Glu) in a two-step reaction: glutamate is first activated by ATP to form Glu-AMP and then transferred to the acceptor end of tRNA(Glu). This Nitrosomonas europaea (strain ATCC 19718 / CIP 103999 / KCTC 2705 / NBRC 14298) protein is Glutamate--tRNA ligase.